A 98-amino-acid polypeptide reads, in one-letter code: NADH-ubiquinone oxidoreductase chain 4L (98 aa).

The next 3 membrane-spanning stretches (helical) occupy residues 1 to 21 (MMSI…GVLI), 28 to 48 (STLL…ALII), and 59 to 79 (APLI…ALLV).

The protein belongs to the complex I subunit 4L family. As to quaternary structure, core subunit of respiratory chain NADH dehydrogenase (Complex I) which is composed of 45 different subunits.

The protein localises to the mitochondrion inner membrane. It catalyses the reaction a ubiquinone + NADH + 5 H(+)(in) = a ubiquinol + NAD(+) + 4 H(+)(out). Functionally, core subunit of the mitochondrial membrane respiratory chain NADH dehydrogenase (Complex I) which catalyzes electron transfer from NADH through the respiratory chain, using ubiquinone as an electron acceptor. Part of the enzyme membrane arm which is embedded in the lipid bilayer and involved in proton translocation. This chain is NADH-ubiquinone oxidoreductase chain 4L (MT-ND4L), found in Lagostrophus fasciatus (Banded hare-wallaby).